The following is a 173-amino-acid chain: MILLAAKGLSLLDVNPGLVVWTLITFLVVVLVLKKFAWDVILKALDERAQAVQNDIEKASELRLEAEALLKDYEARLNSAKDEANAIVAEARSDALKLKNKLLEETNQEVKAQKDQAVKEIELAKGKALEQLQTQFVEMTITIAGKVLEKQLKAEDYKAFIETELNKLGKLSA.

A helical membrane pass occupies residues 12 to 32; that stretch reads LDVNPGLVVWTLITFLVVVLV.

It belongs to the ATPase B chain family. In terms of assembly, F-type ATPases have 2 components, F(1) - the catalytic core - and F(0) - the membrane proton channel. F(1) has five subunits: alpha(3), beta(3), gamma(1), delta(1), epsilon(1). F(0) has three main subunits: a(1), b(2) and c(10-14). The alpha and beta chains form an alternating ring which encloses part of the gamma chain. F(1) is attached to F(0) by a central stalk formed by the gamma and epsilon chains, while a peripheral stalk is formed by the delta and b chains.

It is found in the cell inner membrane. In terms of biological role, f(1)F(0) ATP synthase produces ATP from ADP in the presence of a proton or sodium gradient. F-type ATPases consist of two structural domains, F(1) containing the extramembraneous catalytic core and F(0) containing the membrane proton channel, linked together by a central stalk and a peripheral stalk. During catalysis, ATP synthesis in the catalytic domain of F(1) is coupled via a rotary mechanism of the central stalk subunits to proton translocation. Component of the F(0) channel, it forms part of the peripheral stalk, linking F(1) to F(0). In Leptospira borgpetersenii serovar Hardjo-bovis (strain JB197), this protein is ATP synthase subunit b.